The following is a 643-amino-acid chain: Threonine--tRNA ligase (643 aa).

The TGS domain maps to 1 to 61; that stretch reads MPIITLPDGS…SEDSSLEIIT (61 aa). The catalytic stretch occupies residues 243–534; that stretch reads DHRRIGKALD…ITEEYAGFFP (292 aa). Zn(2+) is bound by residues Cys334, His385, and His511.

This sequence belongs to the class-II aminoacyl-tRNA synthetase family. Homodimer. Zn(2+) is required as a cofactor.

It localises to the cytoplasm. It carries out the reaction tRNA(Thr) + L-threonine + ATP = L-threonyl-tRNA(Thr) + AMP + diphosphate + H(+). Its function is as follows. Catalyzes the attachment of threonine to tRNA(Thr) in a two-step reaction: L-threonine is first activated by ATP to form Thr-AMP and then transferred to the acceptor end of tRNA(Thr). Also edits incorrectly charged L-seryl-tRNA(Thr). This is Threonine--tRNA ligase from Actinobacillus pleuropneumoniae serotype 5b (strain L20).